Consider the following 133-residue polypeptide: Male-specific protein scotti (133 aa).

Positions 11–57 (FPSNGLGNNNNDPNQQRGERPRQPHPDLGWILDAPNEPPRNRNPLLY) are disordered. Residues 14-24 (NGLGNNNNDPN) show a composition bias toward low complexity. Asn-83 is a glycosylation site (N-linked (GlcNAc...) asparagine).

The protein belongs to the male-specific scotti family.

In terms of biological role, post-meiotically transcribed gene that has a role in late spermiogenesis; required for actin cone progression during spermatid individualization. This chain is Male-specific protein scotti, found in Drosophila persimilis (Fruit fly).